The sequence spans 210 residues: Thymidylate kinase (210 aa).

10–17 lines the ATP pocket; that stretch reads GLEGAGKS.

The protein belongs to the thymidylate kinase family.

The enzyme catalyses dTMP + ATP = dTDP + ADP. Its function is as follows. Phosphorylation of dTMP to form dTDP in both de novo and salvage pathways of dTTP synthesis. In Haemophilus influenzae (strain PittGG), this protein is Thymidylate kinase.